Reading from the N-terminus, the 88-residue chain is Defensin-like protein 267 (88 aa).

Residues 1-23 (MMLSKVVLLALLLSLSCLWVAKA) form the signal peptide. Disulfide bonds link cysteine 45/cysteine 63, cysteine 51/cysteine 68, and cysteine 55/cysteine 70.

This sequence belongs to the DEFL family.

It localises to the secreted. In Arabidopsis thaliana (Mouse-ear cress), this protein is Defensin-like protein 267.